Reading from the N-terminus, the 333-residue chain is S-adenosylmethionine-dependent nucleotide dehydratase (333 aa).

One can recognise a Radical SAM core domain in the interval Met-1 to Ile-239. 3 residues coordinate [4Fe-4S] cluster: Cys-16, Cys-20, and Cys-23.

It belongs to the radical SAM superfamily. Viperin family. Requires [4Fe-4S] cluster as cofactor.

The enzyme catalyses GTP + AH2 + S-adenosyl-L-methionine = 3'-deoxy-3',4'-didehydro-GTP + 5'-deoxyadenosine + L-methionine + A + H2O + H(+). Expression of pVip56 in E.coli (strain MG1655) confers resistance to phage P1; has no effect against T7. Catalyzes the conversion of guanosine triphosphate (GTP) to 3'-deoxy-3',4'-didehydro-GTP (ddhGTP), probably via a SAM-dependent radical mechanism. The modified nucleotide represses transcription from T7 RNA polymerase-directed genes (possibly by acting as chain terminators), strongly suggesting these nucleotides block viral polymerase transcription. How this protein allows bacteria to resist viruses that do not encode their own RNA polymerase (such as lambda, P1) is unknown. This is S-adenosylmethionine-dependent nucleotide dehydratase from Fibrobacter sp. (strain UWH6).